The sequence spans 141 residues: Large ribosomal subunit protein uL11 (141 aa).

The protein belongs to the universal ribosomal protein uL11 family. In terms of assembly, part of the ribosomal stalk of the 50S ribosomal subunit. Interacts with L10 and the large rRNA to form the base of the stalk. L10 forms an elongated spine to which L12 dimers bind in a sequential fashion forming a multimeric L10(L12)X complex. In terms of processing, one or more lysine residues are methylated.

Its function is as follows. Forms part of the ribosomal stalk which helps the ribosome interact with GTP-bound translation factors. This chain is Large ribosomal subunit protein uL11, found in Kosmotoga olearia (strain ATCC BAA-1733 / DSM 21960 / TBF 19.5.1).